Here is a 395-residue protein sequence, read N- to C-terminus: THAP domain-containing protein 5 (395 aa).

The segment at 1-84 (MPRYCAAICC…LKQTAVPTIF (84 aa)) adopts a THAP-type zinc-finger fold. The interval 85 to 112 (SLPEDNQGKDPSKKKSQKKNLEDEKEVC) is disordered. Residues 90–112 (NQGKDPSKKKSQKKNLEDEKEVC) are compositionally biased toward basic and acidic residues. The HCFC1-binding motif (HBM) motif lies at 321 to 324 (EHSY). The stretch at 348 to 382 (LELKEQQTLGRLKSLEALIRQLKQENWLSEENVKI) forms a coiled coil.

In terms of assembly, interacts with HTRA2; under apoptotic conditions. Interacts with ABRAXAS2. Cleaved by HTRA2 during apoptosis. Detected in heart. Detected in brain and muscle (at protein level). Highly expressed in the heart. Also found in brain and skeletal muscle.

The protein localises to the nucleus. Functionally, has sequence-specific DNA-binding activity and can function as transcriptional repressor (in vitro). May be a regulator of cell cycle: THAP5 overexpression in human cell lines causes cell cycle arrest at G2/M phase. The polypeptide is THAP domain-containing protein 5 (THAP5) (Homo sapiens (Human)).